The sequence spans 325 residues: Beta-ketoacyl-[acyl-carrier-protein] synthase III (325 aa).

Residues C116 and H252 contribute to the active site. The interval 253–257 is ACP-binding; the sequence is QANLR. N282 is an active-site residue.

The protein belongs to the thiolase-like superfamily. FabH family. In terms of assembly, homodimer.

It is found in the cytoplasm. The enzyme catalyses malonyl-[ACP] + acetyl-CoA + H(+) = 3-oxobutanoyl-[ACP] + CO2 + CoA. It participates in lipid metabolism; fatty acid biosynthesis. Functionally, catalyzes the condensation reaction of fatty acid synthesis by the addition to an acyl acceptor of two carbons from malonyl-ACP. Catalyzes the first condensation reaction which initiates fatty acid synthesis and may therefore play a role in governing the total rate of fatty acid production. Possesses both acetoacetyl-ACP synthase and acetyl transacylase activities. Its substrate specificity determines the biosynthesis of branched-chain and/or straight-chain of fatty acids. This Xanthomonas oryzae pv. oryzae (strain MAFF 311018) protein is Beta-ketoacyl-[acyl-carrier-protein] synthase III.